A 492-amino-acid polypeptide reads, in one-letter code: Glutamyl-tRNA(Gln) amidotransferase subunit A (492 aa).

Residues Lys78 and Ser158 each act as charge relay system in the active site. Ser182 (acyl-ester intermediate) is an active-site residue.

Belongs to the amidase family. GatA subfamily. Heterotrimer of A, B and C subunits.

It catalyses the reaction L-glutamyl-tRNA(Gln) + L-glutamine + ATP + H2O = L-glutaminyl-tRNA(Gln) + L-glutamate + ADP + phosphate + H(+). Functionally, allows the formation of correctly charged Gln-tRNA(Gln) through the transamidation of misacylated Glu-tRNA(Gln) in organisms which lack glutaminyl-tRNA synthetase. The reaction takes place in the presence of glutamine and ATP through an activated gamma-phospho-Glu-tRNA(Gln). This chain is Glutamyl-tRNA(Gln) amidotransferase subunit A, found in Rhodopseudomonas palustris (strain ATCC BAA-98 / CGA009).